Reading from the N-terminus, the 312-residue chain is Malate dehydrogenase (312 aa).

NAD(+)-binding positions include 10-15 and Asp-34; that span reads GAGNTG. Positions 85 and 91 each coordinate substrate. NAD(+)-binding positions include Asn-98 and 121-123; that span reads LTN. The substrate site is built by Asn-123 and Arg-154. His-178 functions as the Proton acceptor in the catalytic mechanism.

The protein belongs to the LDH/MDH superfamily. MDH type 3 family.

The enzyme catalyses (S)-malate + NAD(+) = oxaloacetate + NADH + H(+). In terms of biological role, catalyzes the reversible oxidation of malate to oxaloacetate. This Staphylococcus saprophyticus subsp. saprophyticus (strain ATCC 15305 / DSM 20229 / NCIMB 8711 / NCTC 7292 / S-41) protein is Malate dehydrogenase.